The sequence spans 211 residues: Transcriptional regulatory protein LiaR (211 aa).

The Response regulatory domain occupies R3–S119. D54 bears the 4-aspartylphosphate mark. The 66-residue stretch at N143–H208 folds into the HTH luxR-type domain. The H-T-H motif DNA-binding region spans N167–T186.

Post-translationally, phosphorylated by LiaS.

The protein localises to the cytoplasm. Functionally, member of the two-component regulatory system LiaS/LiaR probably involved in response to a subset of cell wall-active antibiotics that interfere with the lipid II cycle in the cytoplasmic membrane (bacitracin, nisin, ramoplanin and vancomycin). Also seems to be involved in response to cationic antimicrobial peptides and secretion stress. LiaR regulates the transcription of the liaIHGFSR operon. The polypeptide is Transcriptional regulatory protein LiaR (liaR) (Bacillus subtilis (strain 168)).